Consider the following 513-residue polypeptide: ATP synthase subunit alpha (513 aa).

169 to 176 (GDRQTGKT) serves as a coordination point for ATP.

The protein belongs to the ATPase alpha/beta chains family. In terms of assembly, F-type ATPases have 2 components, CF(1) - the catalytic core - and CF(0) - the membrane proton channel. CF(1) has five subunits: alpha(3), beta(3), gamma(1), delta(1), epsilon(1). CF(0) has three main subunits: a(1), b(2) and c(9-12). The alpha and beta chains form an alternating ring which encloses part of the gamma chain. CF(1) is attached to CF(0) by a central stalk formed by the gamma and epsilon chains, while a peripheral stalk is formed by the delta and b chains.

Its subcellular location is the cell inner membrane. The enzyme catalyses ATP + H2O + 4 H(+)(in) = ADP + phosphate + 5 H(+)(out). Produces ATP from ADP in the presence of a proton gradient across the membrane. The alpha chain is a regulatory subunit. This is ATP synthase subunit alpha from Tolumonas auensis (strain DSM 9187 / NBRC 110442 / TA 4).